Here is a 421-residue protein sequence, read N- to C-terminus: Fusaric acid cluster transcription factor FUB10 (421 aa).

The zn(2)-C6 fungal-type DNA-binding region spans 16 to 47; sequence CDRCRAQKLRCHRDSGHSTDACLRCLKSGIEC. Residues 50 to 92 form a disordered region; it reads SKARPTGRPPSRQVQPTVVVEQGDTSSSSHTTDSSPSAGGTDM. Over residues 74 to 86 the composition is skewed to low complexity; the sequence is TSSSSHTTDSSPS.

Its subcellular location is the nucleus. Transcription factor that regulates the expression of the gene cluster that mediates the biosynthesis of fusaric acid, a mycotoxin with low to moderate toxicity to animals and humans, but with high phytotoxic properties. The sequence is that of Fusaric acid cluster transcription factor FUB10 from Gibberella moniliformis (strain M3125 / FGSC 7600) (Maize ear and stalk rot fungus).